A 470-amino-acid polypeptide reads, in one-letter code: Syncoilin (470 aa).

Positions 1–43 are disordered; it reads MASPEPLRGGDGARASREPHTEASFPLQESESPKEAKTFNPEA. A head region spans residues 1–148; it reads MASPEPLRGG…TEGSLPAQPI (148 aa). Position 32 is a phosphoserine (Ser-32). The IF rod domain occupies 157 to 452; sequence SVEDLERLEA…AMLPKSLEQA (296 aa). A coil 1A region spans residues 158–192; that stretch reads VEDLERLEARFQQCVQAVSQLEEERDQLIHELVLL. The interval 193-219 is linker 1; that stretch reads REPALQEVQQVHQDILAAYKLHAQAEL. The segment at 220 to 297 is coil 1b; that stretch reads ERDGLREEIR…KEQLQQQLEA (78 aa). Positions 298 to 337 are linker 2; that stretch reads PPTQSDGHFLQESRRLSTQFENLMAESRQGLEEEYEPQLL. Ser-314 bears the Phosphoserine mark. The coil 2 stretch occupies residues 338-445; it reads RLLERKEAGT…EELSTYKAML (108 aa). The disordered stretch occupies residues 446–470; sequence PKSLEQADAPTSQAGGVEAQSPGTV. The interval 446–470 is tail; that stretch reads PKSLEQADAPTSQAGGVEAQSPGTV.

It belongs to the intermediate filament family. May link the dystrophin-associated glycoprotein complex (DAPC) to intracellular desmin (DES) filaments. Interacts with DES and DTNA. Detected strongly in skeletal muscle and heart and weakly in lung (at protein level). Highly expressed in skeletal muscle and lung and weakly in lung and testis.

The protein localises to the cytoplasm. Its subcellular location is the perinuclear region. Its function is as follows. Atypical type III intermediate filament (IF) protein that may play a supportive role in the efficient coupling of mechanical stress between the myofibril and fiber exterior. May facilitate lateral force transmission during skeletal muscle contraction. Does not form homofilaments nor heterofilaments with other IF proteins. The sequence is that of Syncoilin (Sync) from Mus musculus (Mouse).